Consider the following 512-residue polypeptide: 23S rRNA (uracil(1939)-C(5))-methyltransferase RlmD (512 aa).

Positions 1 to 14 are enriched in low complexity; the sequence is MQPTDSKTSTSDTT. Positions 1–45 are disordered; that stretch reads MQPTDSKTSTSDTTEQPNETQTITIPPSKKKSKPSSKTRRRLKDA. A compositionally biased stretch (polar residues) spans 15–25; sequence EQPNETQTITI. Basic residues predominate over residues 28–42; it reads SKKKSKPSSKTRRRL. Residues 41-113 form the TRAM domain; sequence RLKDAEPLPF…TSFEEGDAVN (73 aa). 4 residues coordinate [4Fe-4S] cluster: Cys-127, Cys-133, Cys-136, and Cys-215. 6 residues coordinate S-adenosyl-L-methionine: Gln-340, Phe-369, Asn-374, Glu-393, Asp-420, and Asp-441. Cys-467 acts as the Nucleophile in catalysis.

It belongs to the class I-like SAM-binding methyltransferase superfamily. RNA M5U methyltransferase family. RlmD subfamily.

It carries out the reaction uridine(1939) in 23S rRNA + S-adenosyl-L-methionine = 5-methyluridine(1939) in 23S rRNA + S-adenosyl-L-homocysteine + H(+). In terms of biological role, catalyzes the formation of 5-methyl-uridine at position 1939 (m5U1939) in 23S rRNA. This Psychrobacter arcticus (strain DSM 17307 / VKM B-2377 / 273-4) protein is 23S rRNA (uracil(1939)-C(5))-methyltransferase RlmD.